The sequence spans 228 residues: DNA mismatch repair protein MutH (228 aa).

This sequence belongs to the MutH family.

The protein localises to the cytoplasm. In terms of biological role, sequence-specific endonuclease that cleaves unmethylated GATC sequences. It is involved in DNA mismatch repair. This chain is DNA mismatch repair protein MutH, found in Photorhabdus laumondii subsp. laumondii (strain DSM 15139 / CIP 105565 / TT01) (Photorhabdus luminescens subsp. laumondii).